Here is a 327-residue protein sequence, read N- to C-terminus: Aliphatic sulfonates import ATP-binding protein SsuB (327 aa).

The disordered stretch occupies residues 21 to 54 (ELAQPRIADGDAQDAAVYERDGGAHAPPDGDRAD). Residues 37-54 (VYERDGGAHAPPDGDRAD) show a composition bias toward basic and acidic residues. Positions 66–285 (VRLTRVSKRY…ARASAAFAAL (220 aa)) constitute an ABC transporter domain. 98-105 (GRSGCGKS) serves as a coordination point for ATP. The disordered stretch occupies residues 300–327 (APAAPNAAGPEGASRGRAAPASGLRWAV).

The protein belongs to the ABC transporter superfamily. Aliphatic sulfonates importer (TC 3.A.1.17.2) family. The complex is composed of two ATP-binding proteins (SsuB), two transmembrane proteins (SsuC) and a solute-binding protein (SsuA).

It localises to the cell inner membrane. It catalyses the reaction ATP + H2O + aliphatic sulfonate-[sulfonate-binding protein]Side 1 = ADP + phosphate + aliphatic sulfonateSide 2 + [sulfonate-binding protein]Side 1.. Functionally, part of the ABC transporter complex SsuABC involved in aliphatic sulfonates import. Responsible for energy coupling to the transport system. The polypeptide is Aliphatic sulfonates import ATP-binding protein SsuB (Burkholderia pseudomallei (strain K96243)).